The primary structure comprises 391 residues: Putative ABC transporter glucose-binding protein TsgA13 (391 aa).

The N-terminal stretch at 1-28 (MLDEESSIQRRDVLSALGAAGVTTLAGC) is a signal peptide. Positions 24–71 (TLAGCTGGDTGDTDDTEASETTASEGTTSGTTTGDVETTDGGGPSEGE) are disordered. Over residues 42-59 (SETTASEGTTSGTTTGDV) the composition is skewed to low complexity.

The protein belongs to the BMP lipoprotein family. In terms of assembly, the complex is composed of two ATP-binding proteins (TsgD13), two transmembrane proteins (TsgB13 and TsgC13) and a solute-binding protein (TsgA13).

Functionally, part of an ABC transporter complex involved in glucose import. The chain is Putative ABC transporter glucose-binding protein TsgA13 (tsgA13) from Haloferax volcanii (strain ATCC 29605 / DSM 3757 / JCM 8879 / NBRC 14742 / NCIMB 2012 / VKM B-1768 / DS2) (Halobacterium volcanii).